Consider the following 350-residue polypeptide: S-adenosylmethionine:tRNA ribosyltransferase-isomerase (350 aa).

It belongs to the QueA family. In terms of assembly, monomer.

The protein localises to the cytoplasm. The catalysed reaction is 7-aminomethyl-7-carbaguanosine(34) in tRNA + S-adenosyl-L-methionine = epoxyqueuosine(34) in tRNA + adenine + L-methionine + 2 H(+). It participates in tRNA modification; tRNA-queuosine biosynthesis. Functionally, transfers and isomerizes the ribose moiety from AdoMet to the 7-aminomethyl group of 7-deazaguanine (preQ1-tRNA) to give epoxyqueuosine (oQ-tRNA). The protein is S-adenosylmethionine:tRNA ribosyltransferase-isomerase of Aliivibrio fischeri (strain MJ11) (Vibrio fischeri).